Here is a 422-residue protein sequence, read N- to C-terminus: Protein phosphatase methylesterase 1 (422 aa).

The tract at residues Met1–Ser27 is disordered. Residues Ser207, Asp234, and His371 contribute to the active site.

It belongs to the AB hydrolase superfamily.

It catalyses the reaction [phosphatase 2A protein]-C-terminal L-leucine methyl ester + H2O = [phosphatase 2A protein]-C-terminal L-leucine + methanol + H(+). Its function is as follows. Demethylates proteins that have been reversibly carboxymethylated. Demethylates the phosphatase PP2A catalytic subunit. This chain is Protein phosphatase methylesterase 1 (PPE1), found in Cryptococcus neoformans var. neoformans serotype D (strain B-3501A) (Filobasidiella neoformans).